Consider the following 283-residue polypeptide: Elongation factor Ts (283 aa).

Positions 80–83 (TDFV) are involved in Mg(2+) ion dislocation from EF-Tu.

Belongs to the EF-Ts family.

It is found in the cytoplasm. In terms of biological role, associates with the EF-Tu.GDP complex and induces the exchange of GDP to GTP. It remains bound to the aminoacyl-tRNA.EF-Tu.GTP complex up to the GTP hydrolysis stage on the ribosome. This chain is Elongation factor Ts, found in Actinobacillus succinogenes (strain ATCC 55618 / DSM 22257 / CCUG 43843 / 130Z).